A 154-amino-acid chain; its full sequence is CASP-like protein 5B2 (154 aa).

At 1–17 (MAGLAGRPGSWGGLVLR) the chain is on the cytoplasmic side. A helical membrane pass occupies residues 18–38 (VGQALFAAACIGVMGSSLGFA). Residues 39-42 (SYTA) lie on the Extracellular side of the membrane. Residues 43–63 (FCYLIASMGLQMLWSFGLACL) traverse the membrane as a helical segment. Residues 64-87 (DGYAIRANKDLTSPILLSLFVVGD) are Cytoplasmic-facing. Residues 88–107 (WVTAILSFAASSSAAGVVIL) form a helical membrane-spanning segment. Residues 108–130 (FQKDVLFCRRYPQLPCGKYELAT) are Extracellular-facing. The helical transmembrane segment at 131 to 151 (AFAFLSWALSATSALIMFWLL) threads the bilayer. The Cytoplasmic segment spans residues 152 to 154 (AAF).

It belongs to the Casparian strip membrane proteins (CASP) family. As to quaternary structure, homodimer and heterodimers.

Its subcellular location is the cell membrane. The polypeptide is CASP-like protein 5B2 (Zea mays (Maize)).